Here is a 254-residue protein sequence, read N- to C-terminus: Myeloblastin (254 aa).

A signal peptide spans 1-27; sequence MSGSYPSPKGIHPFLLLALVVGGAVQA. The propeptide occupies 28-29; sequence SK. Residues 30-250 form the Peptidase S1 domain; the sequence is IVGGHEARPH…YVDWIQNVLR (221 aa). An intrachain disulfide couples Cys-58 to Cys-74. Active-site charge relay system residues include His-73 and Asp-120. Asn-127 and Asn-176 each carry an N-linked (GlcNAc...) asparagine glycan. 3 cysteine pairs are disulfide-bonded: Cys-154/Cys-211, Cys-184/Cys-190, and Cys-201/Cys-226. Catalysis depends on Ser-205, which acts as the Charge relay system. Residues 251 to 254 constitute a propeptide that is removed on maturation; the sequence is GAEP.

It belongs to the peptidase S1 family. Elastase subfamily. As to quaternary structure, may form dimers. Interacts with CD177; the interaction tethers PRTN3 to the cell surface; the interaction is direct. Interacts with SERPINB1. Interacts with ADGRG3.

The protein localises to the lysosome. The protein resides in the secreted. It localises to the cell membrane. Its subcellular location is the membrane raft. It carries out the reaction Hydrolysis of proteins, including elastin, by preferential cleavage: -Ala-|-Xaa- &gt; -Val-|-Xaa-.. Serine protease that degrades elastin, fibronectin, laminin, vitronectin, and collagen types I, III, and IV (in vitro). By cleaving and activating receptor F2RL1/PAR-2, enhances endothelial cell barrier function and thus vascular integrity during neutrophil transendothelial migration. May play a role in neutrophil transendothelial migration, probably when associated with CD177. Triggers inflammatory processes in neutrophils by interacting with ADGRG3 upstream of F2RL1/PAR2 activation. The sequence is that of Myeloblastin (Prtn3) from Mus musculus (Mouse).